A 404-amino-acid chain; its full sequence is Multidrug resistance protein MdtH (404 aa).

Residues 1–12 (MSRVSQARNLGK) lie on the Cytoplasmic side of the membrane. A helical transmembrane segment spans residues 13-33 (YFLLIDNMLVVLGFFVVFPLI). Residues 34-98 (SIRFVDQMGW…GFATMGIAHE (65 aa)) are Periplasmic-facing. Residues 99–116 (PWLLWFSCFLSGLGGTLF) traverse the membrane as a helical segment. The Cytoplasmic segment spans residues 117–138 (DPPRSALVVKLIRPEQRGRFFS). The helical transmembrane segment at 139–159 (LLMMQDSAGAVIGALLGSWLL) threads the bilayer. Over 160–164 (QYDFR) the chain is Periplasmic. A helical transmembrane segment spans residues 165–185 (LVCAMGAILFIVCAIFNAWLL). Over 186–213 (PAWKLSTVRTPVREGMRRVISDKRFVTY) the chain is Cytoplasmic. Residues 214-234 (VLTLAGYYMLAVQVMLMLPIM) traverse the membrane as a helical segment. Residues 235-243 (VNDVAGSPA) lie on the Periplasmic side of the membrane. The chain crosses the membrane as a helical span at residues 244–264 (AVKWMYAIEACLSLTLLYPIA). Topologically, residues 265 to 276 (RWSEKRFRLEHR) are cytoplasmic. The chain crosses the membrane as a helical span at residues 277–297 (LMAGLLIMSLSMIPIGLAGNL). Topologically, residues 298–299 (QQ) are periplasmic. Residues 300 to 320 (LFTLICAFYIGSVIAEPARET) traverse the membrane as a helical segment. The Cytoplasmic portion of the chain corresponds to 321-339 (LSASLTDARARGSYMGFSR). A helical transmembrane segment spans residues 340 to 360 (LGLAIGGAIGYIGGGWLFDMG). At 361–367 (KTLAQPE) the chain is on the periplasmic side. A helical transmembrane segment spans residues 368-388 (LPWMMLGIIGFITFLALGWQF). Over 389 to 404 (SHKRTPRQYTGARRLI) the chain is Cytoplasmic.

Belongs to the major facilitator superfamily. DHA1 family. MdtH (TC 2.A.1.2.21) subfamily.

The protein localises to the cell inner membrane. The polypeptide is Multidrug resistance protein MdtH (Salmonella arizonae (strain ATCC BAA-731 / CDC346-86 / RSK2980)).